Here is a 468-residue protein sequence, read N- to C-terminus: 3-isopropylmalate dehydratase large subunit 2 (468 aa).

Cysteine 349, cysteine 409, and cysteine 412 together coordinate [4Fe-4S] cluster.

Belongs to the aconitase/IPM isomerase family. LeuC type 1 subfamily. Heterodimer of LeuC and LeuD. Requires [4Fe-4S] cluster as cofactor.

It catalyses the reaction (2R,3S)-3-isopropylmalate = (2S)-2-isopropylmalate. Its pathway is amino-acid biosynthesis; L-leucine biosynthesis; L-leucine from 3-methyl-2-oxobutanoate: step 2/4. In terms of biological role, catalyzes the isomerization between 2-isopropylmalate and 3-isopropylmalate, via the formation of 2-isopropylmaleate. The protein is 3-isopropylmalate dehydratase large subunit 2 of Bradyrhizobium diazoefficiens (strain JCM 10833 / BCRC 13528 / IAM 13628 / NBRC 14792 / USDA 110).